We begin with the raw amino-acid sequence, 345 residues long: Beta-hexosaminidase (345 aa).

Substrate is bound by residues aspartate 60, arginine 68, arginine 132, and 162–163; that span reads KH. Residue histidine 175 is the Proton donor/acceptor of the active site. The active-site Nucleophile is the aspartate 247.

This sequence belongs to the glycosyl hydrolase 3 family. NagZ subfamily.

The protein localises to the cytoplasm. The enzyme catalyses Hydrolysis of terminal non-reducing N-acetyl-D-hexosamine residues in N-acetyl-beta-D-hexosaminides.. It participates in cell wall biogenesis; peptidoglycan recycling. Functionally, plays a role in peptidoglycan recycling by cleaving the terminal beta-1,4-linked N-acetylglucosamine (GlcNAc) from peptide-linked peptidoglycan fragments, giving rise to free GlcNAc, anhydro-N-acetylmuramic acid and anhydro-N-acetylmuramic acid-linked peptides. This is Beta-hexosaminidase from Actinobacillus pleuropneumoniae serotype 3 (strain JL03).